Here is a 523-residue protein sequence, read N- to C-terminus: Polyamine aminopropyltransferase (523 aa).

Helical transmembrane passes span 20–40 (VLLAAVAACAACGLVYELALL), 51–71 (IVATSLIVAGYIAALGAGALL), 88–108 (AVLGIIGGLSAAALYAAFAFL), 116–136 (LVLAVGTALIGGLVGAEVPLL), 164–184 (LGALVGGLAWPFLLLPQLGMI), 186–206 (GAAVTGIVNLAAAGVVSIFLL), and 215–235 (LVTALCALAAALGLIATLLVH). Residues 203-478 (IFLLRHVVSG…APTPAVPSTA (276 aa)) form a spermidine synthase region. The PABS domain occupies 231-465 (TLLVHSHDIE…GDWGFALARL (235 aa)). Q261 is an S-methyl-5'-thioadenosine binding site. A spermidine-binding site is contributed by D313. Residues E333 and 365–366 (DA) contribute to the S-methyl-5'-thioadenosine site. The Proton acceptor role is filled by D386.

The protein belongs to the spermidine/spermine synthase family. As to quaternary structure, homodimer or homotetramer.

It localises to the cell membrane. The enzyme catalyses S-adenosyl 3-(methylsulfanyl)propylamine + putrescine = S-methyl-5'-thioadenosine + spermidine + H(+). The protein operates within amine and polyamine biosynthesis; spermidine biosynthesis; spermidine from putrescine: step 1/1. Functionally, catalyzes the irreversible transfer of a propylamine group from the amino donor S-adenosylmethioninamine (decarboxy-AdoMet) to putrescine (1,4-diaminobutane) to yield spermidine. This Mycobacterium bovis (strain ATCC BAA-935 / AF2122/97) protein is Polyamine aminopropyltransferase.